Reading from the N-terminus, the 148-residue chain is MAQNNKELEKLAYEYQVLQAQAQILAQNLELLNLAKAEVQTVRETLENLKKIEEEKPEILVPIGAGSFLKGVIVDKNNAIVSVGSGYAVERSIDEAISFLEKRLKEYDEAIKKTQGALAELEKRIGEVARKAQEVQQKQSMTSFKVKK.

Belongs to the prefoldin subunit alpha family. Heterohexamer of two alpha and four beta subunits.

Its subcellular location is the cytoplasm. Functionally, molecular chaperone capable of stabilizing a range of proteins. Seems to fulfill an ATP-independent, HSP70-like function in archaeal de novo protein folding. The polypeptide is Prefoldin subunit alpha (pfdA) (Pyrococcus horikoshii (strain ATCC 700860 / DSM 12428 / JCM 9974 / NBRC 100139 / OT-3)).